The following is a 432-amino-acid chain: Tol-Pal system protein TolB (432 aa).

Residues Met-1–Ala-21 form the signal peptide.

The protein belongs to the TolB family. In terms of assembly, the Tol-Pal system is composed of five core proteins: the inner membrane proteins TolA, TolQ and TolR, the periplasmic protein TolB and the outer membrane protein Pal. They form a network linking the inner and outer membranes and the peptidoglycan layer.

The protein localises to the periplasm. Its function is as follows. Part of the Tol-Pal system, which plays a role in outer membrane invagination during cell division and is important for maintaining outer membrane integrity. In Pseudomonas aeruginosa (strain ATCC 15692 / DSM 22644 / CIP 104116 / JCM 14847 / LMG 12228 / 1C / PRS 101 / PAO1), this protein is Tol-Pal system protein TolB.